A 248-amino-acid polypeptide reads, in one-letter code: MEIKLQGKVSLVTGSTRGIGRAIAEKLASAGSTVIITGTSGERAKAVAEEIANKYGVKAHGVEMNLLSEESINKAFEEIYNLVDGIDILVNNAGITRDKLFLRMSLLDWEEVLKVNLTGTFLVTQNSLRKMIKQRWGRIVNISSVVGFTGNVGQVNYSTTKAGLIGFTKSLAKELAPRNVLVNAVAPGFIETDMTAVLSEEIKQKYKEQIPLGRFGSPEEVANVVLFLCSELASYITGEVIHVNGGMF.

NADP(+)-binding positions include 14–17, threonine 39, 65–66, and asparagine 92; these read GSTR and NL. Serine 144 is a binding site for substrate. The active-site Proton acceptor is the tyrosine 157. Residues 157–161 and isoleucine 190 contribute to the NADP(+) site; that span reads YSTTK.

This sequence belongs to the short-chain dehydrogenases/reductases (SDR) family. As to quaternary structure, homotetramer.

It catalyses the reaction a (3R)-hydroxyacyl-[ACP] + NADP(+) = a 3-oxoacyl-[ACP] + NADPH + H(+). It functions in the pathway lipid metabolism; fatty acid biosynthesis. Its function is as follows. Catalyzes the NADPH-dependent reduction of beta-ketoacyl-ACP substrates to beta-hydroxyacyl-ACP products, the first reductive step in the elongation cycle of fatty acid biosynthesis. This Aquifex aeolicus (strain VF5) protein is 3-oxoacyl-[acyl-carrier-protein] reductase FabG (fabG).